Here is a 336-residue protein sequence, read N- to C-terminus: Spore photoproduct lyase (336 aa).

One can recognise a Radical SAM core domain in the interval 74–305 (CKPSANYQLP…KFGQFGYGKY (232 aa)). Cys-88, Cys-92, and Cys-95 together coordinate [4Fe-4S] cluster. The H-T-H motif DNA-binding region spans 215 to 232 (ESAYNILNSGYKTGFIVG).

The protein belongs to the radical SAM superfamily. SPL family. As to quaternary structure, monomer or homodimer. [4Fe-4S] cluster serves as cofactor. S-adenosyl-L-methionine is required as a cofactor.

It carries out the reaction (5R)-5,6-dihydro-5-(thymidin-7-yl)thymidine in DNA = a thymidine dimer in DNA. Involved in repair of UV radiation-induced DNA damage during spore germination. Can repair thymine dimer 5-thyminyl-5,6-dihydrothymine (known as spore photoproduct (SP)) by in situ monomerization of SP to two thymines. This Clostridium acetobutylicum (strain ATCC 824 / DSM 792 / JCM 1419 / IAM 19013 / LMG 5710 / NBRC 13948 / NRRL B-527 / VKM B-1787 / 2291 / W) protein is Spore photoproduct lyase (splB).